Reading from the N-terminus, the 382-residue chain is uncharacterized protein (382 aa).

This is an uncharacterized protein from Frog virus 3 (isolate Goorha) (FV-3).